Here is a 187-residue protein sequence, read N- to C-terminus: Peptide deformylase (187 aa).

The Fe cation site is built by C107 and H149. E150 is an active-site residue. H153 is a Fe cation binding site.

Belongs to the polypeptide deformylase family. Requires Fe(2+) as cofactor.

It carries out the reaction N-terminal N-formyl-L-methionyl-[peptide] + H2O = N-terminal L-methionyl-[peptide] + formate. In terms of biological role, removes the formyl group from the N-terminal Met of newly synthesized proteins. Requires at least a dipeptide for an efficient rate of reaction. N-terminal L-methionine is a prerequisite for activity but the enzyme has broad specificity at other positions. This chain is Peptide deformylase, found in Microchaete diplosiphon (Fremyella diplosiphon).